We begin with the raw amino-acid sequence, 64 residues long: Lantibiotic actagardine (64 aa).

The propeptide occupies 1–45 (MSALAIEKSWKDVDLRDGATSHPAGLGFGELTFEDLREDRTIYAA). A cross-link (lanthionine (Ser-Cys)) is located at residues 46–51 (SSGWVC). 2 cross-links (beta-methyllanthionine (Thr-Cys)) span residues 52-57 (TLTIEC) and 54-62 (TIECGTVIC). The segment at residues 59–64 (TVICAC) is a cross-link (beta-methyllanthionine sulfoxide (Thr-Cys)).

This sequence belongs to the type B lantibiotic family. Maturation of lantibiotics involves the enzymatic conversion of Thr, and Ser into dehydrated AA by the enzyme garM and the formation of thioether bonds with cysteine. The 59-64 beta-methyllanthionine thioether bond is oxidized to a sulfoxide by the monooxygenase GarO. This is followed by membrane translocation and cleavage of the modified precursor. Post-translationally, the sulfoxide group of the 59-64 beta-methyllanthionine thioether bond is mildly important for activity, since the antibacterial activity of deoxyactagardine is marginally lower compared with oxidized actagardine.

In terms of biological role, has potent antibacterial activity against some Gram-positive bacteria. Has good antistreptococcal activity. Inhibits cell wall biosynthesis by binding to lipid II and blocking transglycosylation. The chain is Lantibiotic actagardine from Actinoplanes garbadinensis.